The chain runs to 514 residues: Putative fumarate hydratase class I (514 aa).

The [4Fe-4S] cluster site is built by Cys-62, Cys-187, and Cys-274.

Belongs to the class-I fumarase family. Homodimer. [4Fe-4S] cluster is required as a cofactor.

The catalysed reaction is (S)-malate = fumarate + H2O. Its pathway is carbohydrate metabolism; tricarboxylic acid cycle; (S)-malate from fumarate: step 1/1. Its function is as follows. Catalyzes the reversible hydration of fumarate to (S)-malate. This is Putative fumarate hydratase class I (fumA) from Geobacillus stearothermophilus (Bacillus stearothermophilus).